A 304-amino-acid chain; its full sequence is Nicotinamide/nicotinic acid mononucleotide adenylyltransferase 2 (304 aa).

Residues serine 16 and phenylalanine 17 each contribute to the NAD(+) site. An ATP-binding site is contributed by histidine 24. Residues tryptophan 92 and threonine 95 each coordinate NAD(+). 2 S-palmitoyl cysteine lipidation sites follow: cysteine 161 and cysteine 162. Glycine 197, aspartate 199, leucine 209, tryptophan 210, and arginine 229 together coordinate NAD(+). Residue 268-271 (TKSR) coordinates ATP.

This sequence belongs to the eukaryotic NMN adenylyltransferase family. Monomer. The cofactor is Mg(2+).

It is found in the golgi apparatus membrane. The protein localises to the cytoplasmic vesicle membrane. Its subcellular location is the cytoplasm. The protein resides in the cell projection. It localises to the axon. The enzyme catalyses beta-nicotinamide D-ribonucleotide + ATP + H(+) = diphosphate + NAD(+). It carries out the reaction nicotinate beta-D-ribonucleotide + ATP + H(+) = deamido-NAD(+) + diphosphate. Its pathway is cofactor biosynthesis; NAD(+) biosynthesis; NAD(+) from nicotinamide D-ribonucleotide: step 1/1. It functions in the pathway cofactor biosynthesis; NAD(+) biosynthesis; deamido-NAD(+) from nicotinate D-ribonucleotide: step 1/1. In terms of biological role, nicotinamide/nicotinate-nucleotide adenylyltransferase that acts as an axon maintenance factor. Axon survival factor required for the maintenance of healthy axons: acts by delaying Wallerian axon degeneration, an evolutionarily conserved process that drives the loss of damaged axons. Catalyzes the formation of NAD(+) from nicotinamide mononucleotide (NMN) and ATP. Can also use the deamidated form; nicotinic acid mononucleotide (NaMN) as substrate but with a lower efficiency. Also catalyzes the reverse reaction, i.e. the pyrophosphorolytic cleavage of NAD(+). For the pyrophosphorolytic activity prefers NAD(+), NADH and NaAD as substrates and degrades nicotinic acid adenine dinucleotide phosphate (NHD) less effectively. Also acts as an activator of ADP-ribosylation by supporting the catalytic activity of PARP16 and promoting mono-ADP-ribosylation of ribosomes by PARP16. May be involved in the maintenance of axonal integrity. The protein is Nicotinamide/nicotinic acid mononucleotide adenylyltransferase 2 (nmnat2) of Danio rerio (Zebrafish).